The following is a 226-amino-acid chain: Ribonuclease 3 (226 aa).

Residues 7–129 form the RNase III domain; it reads LPRLCRTLGY…IIGAVYLDAD (123 aa). Glutamate 42 is a Mg(2+) binding site. Aspartate 46 is an active-site residue. Residues aspartate 115 and glutamate 118 each coordinate Mg(2+). The active site involves glutamate 118. Residues 156–226 form the DRBM domain; the sequence is DPKTILQEYL…AAQVLELLNK (71 aa).

Belongs to the ribonuclease III family. In terms of assembly, homodimer. The cofactor is Mg(2+).

It is found in the cytoplasm. The catalysed reaction is Endonucleolytic cleavage to 5'-phosphomonoester.. Digests double-stranded RNA. Involved in the processing of primary rRNA transcript to yield the immediate precursors to the large and small rRNAs (23S and 16S). Processes some mRNAs, and tRNAs when they are encoded in the rRNA operon. Processes pre-crRNA and tracrRNA of type II CRISPR loci if present in the organism. The sequence is that of Ribonuclease 3 from Shewanella frigidimarina (strain NCIMB 400).